The primary structure comprises 317 residues: MPVLGSQRRLLGSLNCTPPATFPLTLAPNRTGPQCLEVSIPDGLFLSLGLVSLVENVLVVAAIAKNRNLHSPMYYFICCLAVSDLLVSVSNVLETAVMLLLEAGALAARAAVVQQLDNVIDMLICGSMVSSLCFLGAIAVDRYISIFYALRYHSVVTLPRAWRIIAAIWVASILTSLLFITYYNHTVVLLCLVGFFIAMLALMAVLYVHMLARACQHARGIARLQKRQRPIHQGFGLKGAATLTILLGVFFLCWGPFFLHLSLIVLCPQHPTCGCIFKNFNLFLALIICNAIVDPLIYAFRSQELRKTLQEVLQCSW.

Topologically, residues 1–37 (MPVLGSQRRLLGSLNCTPPATFPLTLAPNRTGPQCLE) are extracellular. A glycan (N-linked (GlcNAc...) asparagine) is linked at N29. Residues 38–63 (VSIPDGLFLSLGLVSLVENVLVVAAI) form a helical membrane-spanning segment. Residues 64 to 72 (AKNRNLHSP) lie on the Cytoplasmic side of the membrane. A helical transmembrane segment spans residues 73–93 (MYYFICCLAVSDLLVSVSNVL). Residues 94 to 118 (ETAVMLLLEAGALAARAAVVQQLDN) are Extracellular-facing. Residues 119–140 (VIDMLICGSMVSSLCFLGAIAV) traverse the membrane as a helical segment. At 141–163 (DRYISIFYALRYHSVVTLPRAWR) the chain is on the cytoplasmic side. A helical transmembrane segment spans residues 164–183 (IIAAIWVASILTSLLFITYY). Over 184 to 191 (NHTVVLLC) the chain is Extracellular. A helical transmembrane segment spans residues 192–211 (LVGFFIAMLALMAVLYVHML). Residues 212–240 (ARACQHARGIARLQKRQRPIHQGFGLKGA) are Cytoplasmic-facing. The chain crosses the membrane as a helical span at residues 241 to 266 (ATLTILLGVFFLCWGPFFLHLSLIVL). The Extracellular segment spans residues 267–279 (CPQHPTCGCIFKN). The helical transmembrane segment at 280–300 (FNLFLALIICNAIVDPLIYAF) threads the bilayer. Topologically, residues 301–317 (RSQELRKTLQEVLQCSW) are cytoplasmic. The S-palmitoyl cysteine moiety is linked to residue C315.

The protein belongs to the G-protein coupled receptor 1 family. As to quaternary structure, interacts with MGRN1, but does not undergo MGRN1-mediated ubiquitination; this interaction competes with GNAS-binding and thus inhibits agonist-induced cAMP production. Interacts with OPN3; the interaction results in a decrease in MC1R-mediated cAMP signaling and ultimately a decrease in melanin production in melanocytes.

The protein resides in the cell membrane. Receptor for MSH (alpha, beta and gamma) and ACTH. The activity of this receptor is mediated by G proteins which activate adenylate cyclase. Mediates melanogenesis, the production of eumelanin (black/brown) and phaeomelanin (red/yellow), via regulation of cAMP signaling in melanocytes. The polypeptide is Melanocyte-stimulating hormone receptor (MC1R) (Capreolus capreolus (European roe deer)).